A 153-amino-acid polypeptide reads, in one-letter code: Lipoprotein signal peptidase (153 aa).

2 consecutive transmembrane segments (helical) span residues 52–72 (ILAG…IGIV) and 81–101 (GQML…GNFI). Active-site residues include aspartate 111 and aspartate 129. A helical transmembrane segment spans residues 124–144 (IFNIADSSLCVGVILLFIHML).

The protein belongs to the peptidase A8 family.

The protein resides in the cell membrane. The catalysed reaction is Release of signal peptides from bacterial membrane prolipoproteins. Hydrolyzes -Xaa-Yaa-Zaa-|-(S,diacylglyceryl)Cys-, in which Xaa is hydrophobic (preferably Leu), and Yaa (Ala or Ser) and Zaa (Gly or Ala) have small, neutral side chains.. It participates in protein modification; lipoprotein biosynthesis (signal peptide cleavage). This protein specifically catalyzes the removal of signal peptides from prolipoproteins. The chain is Lipoprotein signal peptidase from Bacillus velezensis (strain DSM 23117 / BGSC 10A6 / LMG 26770 / FZB42) (Bacillus amyloliquefaciens subsp. plantarum).